The following is a 24-amino-acid chain: 12 kDa protein (24 aa).

This is 12 kDa protein from Mycolicibacterium smegmatis (Mycobacterium smegmatis).